Consider the following 115-residue polypeptide: Mitochondrial zinc maintenance protein 1, mitochondrial (115 aa).

The transit peptide at 1–23 (MTTSTAAAAKSAYRQLLRSTRVV) directs the protein to the mitochondrion.

This sequence belongs to the complex I LYR family. MZM1 subfamily. In terms of assembly, interacts with RIP1.

It localises to the mitochondrion matrix. Its function is as follows. Assembly factor required for Rieske Fe-S protein RIP1 incorporation into the cytochrome b-c1 (CIII) complex. Functions as a chaperone, binding to this subunit within the mitochondrial matrix and stabilizing it prior to its translocation and insertion into the late CIII dimeric intermediate within the mitochondrial inner membrane. Modulates the mitochondrial matrix zinc pool. The protein is Mitochondrial zinc maintenance protein 1, mitochondrial (MZM1) of Penicillium rubens (strain ATCC 28089 / DSM 1075 / NRRL 1951 / Wisconsin 54-1255) (Penicillium chrysogenum).